The sequence spans 568 residues: Protein phosphatase 1 regulatory inhibitor subunit 16B (568 aa).

Positions 15–55 (EKVPTLERLRAAQKRRAQQLKKWAQYEQDLQHRKRKHERKR) form a coiled coil. Serine 69 is subject to Phosphoserine. 4 ANK repeats span residues 100–129 (DGLTALHQCCIDNFEEIVKLLLSHGANVNA), 133–162 (ELWTPLHAAATCGHINLVKILVQYGADLLA), 228–257 (QGATLLHIAGANGYLRAAELLLDHGVRVDV), and 261–290 (DGWEPLHAAAFWGQMQMAELLVSHGASLSA). The interval 327-346 (RHKSSLSRRTSSAGSRGKVV) is disordered. A phosphoserine mark is found at serine 333, serine 337, and serine 350. The span at 333-342 (SRRTSSAGSR) shows a compositional bias: low complexity. A disordered region spans residues 373 to 404 (SASEDQRNSTYNGDIRETRTDQENKDPNPRLE). Over residues 386–404 (DIRETRTDQENKDPNPRLE) the composition is skewed to basic and acidic residues. Serine 477 carries the phosphoserine modification. The tract at residues 504 to 525 (GSGVSRTGEGSSEGKAPLIGGR) is disordered. One copy of the ANK 5 repeat lies at 531–560 (SNGTSVYYTVTSGDPPLLKFKAPIEEMEEK). Cysteine 564 carries the S-palmitoyl cysteine lipid modification. Cysteine methyl ester is present on cysteine 565. The S-farnesyl cysteine moiety is linked to residue cysteine 565. Residues 566-568 (RIS) constitute a propeptide, removed in mature form.

Interacts with PPP1CA, PPP1CB and MSN. Interacts (via its fourth ankyrin repeat) with the mature dimeric form of RPSA/LAMR1. Interacts with EEF1A1. Interacts with PTEN. Interacts with ECE1. Post-translationally, phosphorylated by PKA and, after PKA priming, by GSK3B. Phosphorylation by GSK3B reduces its association with PP1C and enhances PP1C activity. Dephosphorylation by its associated PP1C results in enhanced association with PP1C, but reduced PP1C activity.

It localises to the cell membrane. Its subcellular location is the nucleus. The protein resides in the cell projection. Functionally, regulator of protein phosphatase 1 (PP1) that acts as a positive regulator of pulmonary endothelial cell (EC) barrier function. Protects the endothelial barrier from lipopolysaccharide (LPS)-induced vascular leakage. Involved in the regulation of the PI3K/AKT signaling pathway. Involved in the regulation of angiogenesis and endothelial cell proliferation through the control of ECE1 dephosphorylation, trafficking and activity. Involved in the regulation of endothelial cell filopodia extension. May be a downstream target for TGF-beta1 signaling cascade in endothelial cells. Involved in PKA-mediated moesin dephosphorylation which is important in EC barrier protection against thrombin stimulation. Promotes the interaction of PPP1CA with RPSA/LAMR1 and in turn facilitates the dephosphorylation of RPSA/LAMR1. Involved in the dephosphorylation of EEF1A1. This is Protein phosphatase 1 regulatory inhibitor subunit 16B (PPP1R16B) from Bos taurus (Bovine).